We begin with the raw amino-acid sequence, 213 residues long: MRSKYIVIEGLEGAGKTTARNVVVETLEQLGIRDMVFTREPGGTQLAEKLRSLVLDIKSVGDEVITDKAEVLMFYAARVQLVETVIKPALANGTWVIGDRHDLSTQAYQGGGRGIDQHMLATLRDAVLGDFRPDLTLYLDVTPEVGLKRARARGELDRIEQESFDFFNRTRARYLELAAQDKSIHTIDATQPLEAVMDAIRTTVTNWVKELDA.

10-17 serves as a coordination point for ATP; the sequence is GLEGAGKT.

The protein belongs to the thymidylate kinase family.

The enzyme catalyses dTMP + ATP = dTDP + ADP. Functionally, phosphorylation of dTMP to form dTDP in both de novo and salvage pathways of dTTP synthesis. The protein is Thymidylate kinase of Escherichia coli O6:K15:H31 (strain 536 / UPEC).